Here is a 465-residue protein sequence, read N- to C-terminus: Ribulose bisphosphate carboxylase large chain (465 aa).

Lys-4 is subject to N6,N6,N6-trimethyllysine. 2 residues coordinate substrate: Asn-113 and Thr-163. The Proton acceptor role is filled by Lys-165. Lys-167 serves as a coordination point for substrate. Mg(2+) is bound by residues Lys-191, Asp-193, and Glu-194. N6-carboxylysine is present on Lys-191. The active-site Proton acceptor is the His-284. Substrate-binding residues include Arg-285, His-317, and Ser-369.

Belongs to the RuBisCO large chain family. Type I subfamily. Heterohexadecamer of 8 large chains and 8 small chains; disulfide-linked. The disulfide link is formed within the large subunit homodimers. Mg(2+) serves as cofactor. Post-translationally, the disulfide bond which can form in the large chain dimeric partners within the hexadecamer appears to be associated with oxidative stress and protein turnover.

The protein localises to the plastid. Its subcellular location is the chloroplast. It catalyses the reaction 2 (2R)-3-phosphoglycerate + 2 H(+) = D-ribulose 1,5-bisphosphate + CO2 + H2O. The enzyme catalyses D-ribulose 1,5-bisphosphate + O2 = 2-phosphoglycolate + (2R)-3-phosphoglycerate + 2 H(+). In terms of biological role, ruBisCO catalyzes two reactions: the carboxylation of D-ribulose 1,5-bisphosphate, the primary event in carbon dioxide fixation, as well as the oxidative fragmentation of the pentose substrate in the photorespiration process. Both reactions occur simultaneously and in competition at the same active site. The chain is Ribulose bisphosphate carboxylase large chain from Securidaca diversifolia (Easter flower).